A 157-amino-acid chain; its full sequence is Class 10 plant pathogenesis-related protein 2E (157 aa).

Residue D8 coordinates trans-zeatin. Ca(2+)-binding residues include P32, V35, and I38. Trans-zeatin is bound by residues E60, H69, Y81, and Y83.

The protein belongs to the BetVI family.

Its subcellular location is the cytoplasm. It is found in the cytosol. Its function is as follows. Class II ribonuclease (RNase). Binds to cytokinins. Interacts with melatonin. In Lupinus luteus (European yellow lupine), this protein is Class 10 plant pathogenesis-related protein 2E.